The sequence spans 518 residues: Sensor protein kinase HptS (518 aa).

A run of 2 helical transmembrane segments spans residues isoleucine 20 to tryptophan 40 and glycine 222 to isoleucine 242. A Histidine kinase domain is found at glutamate 297 to arginine 513. Position 325 is a phosphohistidine; by autocatalysis (histidine 325).

Autophosphorylated.

The protein localises to the cell membrane. It carries out the reaction ATP + protein L-histidine = ADP + protein N-phospho-L-histidine.. In terms of biological role, member of the two-component regulatory system HptS/HptR that regulates genes involved in hexose phosphate transport system in response to changes in extracellular phosphate sources. May act as a sensor protein kinase which is autophosphorylated at a histidine residue and transfers its phosphate group to the conserved aspartic acid residue in the regulatory domain of HptS. In turn, HptS antagonizes CcpA-dependent transcription of a subset of CcpA-regulated genes involved in antibiotic susceptibility. The sequence is that of Sensor protein kinase HptS (hptS) from Staphylococcus aureus (strain bovine RF122 / ET3-1).